Consider the following 133-residue polypeptide: Small ribosomal subunit protein eS24y (133 aa).

The tract at residues 104-133 is disordered; that stretch reads KSRKQIKERKNRAKKIRGVKKTKAGDTKKK. Positions 109-125 are enriched in basic residues; that stretch reads IKERKNRAKKIRGVKKT.

This sequence belongs to the eukaryotic ribosomal protein eS24 family.

This is Small ribosomal subunit protein eS24y (RPS24B) from Arabidopsis thaliana (Mouse-ear cress).